Consider the following 460-residue polypeptide: Kynurenine 3-monooxygenase (460 aa).

FAD contacts are provided by residues Val13, 32-34 (DFR), and Ala53. L-kynurenine is bound by residues Arg83 and Tyr97. FAD contacts are provided by residues Arg109, Leu133, Tyr195, Asp314, and 325–328 (QGMN). L-kynurenine contacts are provided by Asn373 and Tyr408.

This sequence belongs to the aromatic-ring hydroxylase family. KMO subfamily. FAD is required as a cofactor.

Its subcellular location is the mitochondrion outer membrane. It catalyses the reaction L-kynurenine + NADPH + O2 + H(+) = 3-hydroxy-L-kynurenine + NADP(+) + H2O. The protein operates within cofactor biosynthesis; NAD(+) biosynthesis; quinolinate from L-kynurenine: step 1/3. Its function is as follows. Catalyzes the hydroxylation of L-kynurenine (L-Kyn) to form 3-hydroxy-L-kynurenine (L-3OHKyn). Required for synthesis of quinolinic acid. The protein is Kynurenine 3-monooxygenase of Saccharomyces cerevisiae (strain ATCC 204508 / S288c) (Baker's yeast).